A 280-amino-acid polypeptide reads, in one-letter code: Equatorin (280 aa).

The signal sequence occupies residues 1 to 19 (MDFILLIFLSGVFLPNIFS). Residues 20-183 (LQPTVEQDPG…LSELEEIKLK (164 aa)) lie on the Vesicular side of the membrane. Residues 112–131 (ATASGEEDKRSEPSRKSSTP) are disordered. Positions 117–126 (EEDKRSEPSR) are enriched in basic and acidic residues. Asparagine 145 is a glycosylation site (N-linked (GlcNAc...) asparagine). A helical membrane pass occupies residues 184–204 (LMLGISLMTLILLIPLLIFCF). Topologically, residues 205 to 280 (ATLYKLRHLR…AEVTEERISE (76 aa)) are cytoplasmic. Serine 279 bears the Phosphoserine mark.

In terms of assembly, interacts with SNAP25. Highly N- and O-glycosylated; contains sialic acid. In terms of tissue distribution, highly expressed in testis and epididymis. Low expression in other tissues.

It is found in the cytoplasmic vesicle. The protein localises to the secretory vesicle. It localises to the acrosome membrane. The protein resides in the acrosome inner membrane. Its subcellular location is the acrosome outer membrane. Functionally, acrosomal membrane-anchored protein involved in the process of fertilization and in acrosome biogenesis. This chain is Equatorin (Eqtn), found in Rattus norvegicus (Rat).